The sequence spans 1690 residues: DNA-directed RNA polymerase subunit beta' (1690 aa).

Positions 63, 65, 78, and 81 each coordinate Zn(2+). Positions 753, 755, and 757 each coordinate Mg(2+). Residues Cys-1107, Cys-1295, Cys-1302, and Cys-1305 each coordinate Zn(2+).

This sequence belongs to the RNA polymerase beta' chain family. As to quaternary structure, the RNAP catalytic core consists of 2 alpha, 1 beta, 1 beta' and 1 omega subunit. When a sigma factor is associated with the core the holoenzyme is formed, which can initiate transcription. Mg(2+) serves as cofactor. Requires Zn(2+) as cofactor.

The catalysed reaction is RNA(n) + a ribonucleoside 5'-triphosphate = RNA(n+1) + diphosphate. Functionally, DNA-dependent RNA polymerase catalyzes the transcription of DNA into RNA using the four ribonucleoside triphosphates as substrates. This is DNA-directed RNA polymerase subunit beta' from Thermotoga neapolitana (strain ATCC 49049 / DSM 4359 / NBRC 107923 / NS-E).